The sequence spans 757 residues: Transferrin receptor protein 1 (757 aa).

At 1 to 67 (MMDQARSAIS…KHRRLNGRLC (67 aa)) the chain is on the cytoplasmic side. The mediates interaction with SH3BP4 stretch occupies residues 1 to 67 (MMDQARSAIS…KHRRLNGRLC (67 aa)). A phosphoserine mark is found at Ser10 and Ser19. Tyr20 carries the post-translational modification Phosphotyrosine. Positions 20–23 (YTRF) match the Endocytosis signal motif. The residue at position 21 (Thr21) is a Phosphothreonine. The residue at position 24 (Ser24) is a Phosphoserine. A Stop-transfer sequence motif is present at residues 58–61 (KHRR). A lipid anchor (S-palmitoyl cysteine) is attached at Cys67. The chain crosses the membrane as a helical; Signal-anchor for type II membrane protein span at residues 68 to 88 (FGTIAVVIFFLIGFMIGYLGY). Residues 89–757 (CKRTEQKDCV…GDIWDIDNEF (669 aa)) lie on the Extracellular side of the membrane. An O-linked (GalNAc...) threonine glycan is attached at Thr103. The PA domain maps to 220 to 310 (SKATTVSGKL…GTGDPYTPGF (91 aa)). N-linked (GlcNAc...) asparagine glycosylation is found at Asn248 and Asn314. The tract at residues 566-757 (NLDTYEKLIQ…GDIWDIDNEF (192 aa)) is ligand-binding. The Cell attachment site motif lies at 643-645 (RGD). Asn719 and Asn724 each carry an N-linked (GlcNAc...) asparagine glycan.

Belongs to the peptidase M28 family. M28B subfamily. As to quaternary structure, homodimer; disulfide-linked. Binds one transferrin molecule per subunit. Interacts with SH3BP4. Interacts with STEAP3; facilitates TFRC endocytosis in erythroid precursor cells. In terms of processing, stearoylated by ZDHHC6 which inhibits TFRC-mediated activation of the JNK pathway and promotes mitochondrial fragmentation. Stearoylation does not affect iron uptake. N- and O-glycosylated, phosphorylated and palmitoylated.

It is found in the cell membrane. The protein resides in the melanosome. In terms of biological role, cellular uptake of iron occurs via receptor-mediated endocytosis of ligand-occupied transferrin receptor into specialized endosomes. Endosomal acidification leads to iron release. The apotransferrin-receptor complex is then recycled to the cell surface with a return to neutral pH and the concomitant loss of affinity of apotransferrin for its receptor. Transferrin receptor is necessary for development of erythrocytes and the nervous system. Positively regulates T and B cell proliferation through iron uptake. Acts as a lipid sensor that regulates mitochondrial fusion by regulating activation of the JNK pathway. When dietary levels of stearate (C18:0) are low, promotes activation of the JNK pathway, resulting in HUWE1-mediated ubiquitination and subsequent degradation of the mitofusin MFN2 and inhibition of mitochondrial fusion. When dietary levels of stearate (C18:0) are high, TFRC stearoylation inhibits activation of the JNK pathway and thus degradation of the mitofusin MFN2. Mediates uptake of NICOL1 into fibroblasts where it may regulate extracellular matrix production. The sequence is that of Transferrin receptor protein 1 (TFRC) from Cricetulus griseus (Chinese hamster).